Here is an 82-residue protein sequence, read N- to C-terminus: RNA-binding protein Hfq (82 aa).

In terms of domain architecture, Sm spans 9–68; sequence DPYLNTLRKERVPVSIYLVNGIKLQGQIESFDQFVILLKNTVSQMVYKHAISTVVPSRPV.

This sequence belongs to the Hfq family. Homohexamer.

RNA chaperone that binds small regulatory RNA (sRNAs) and mRNAs to facilitate mRNA translational regulation in response to envelope stress, environmental stress and changes in metabolite concentrations. Also binds with high specificity to tRNAs. The protein is RNA-binding protein Hfq of Pseudomonas aeruginosa (strain LESB58).